The chain runs to 503 residues: AMP phosphorylase (503 aa).

AMP contacts are provided by residues Gly168, 194–199, and Thr203; that span reads SRAITS. Asp256 acts as the Proton donor in catalysis. Residues Ser264 and Lys288 each coordinate AMP.

The protein belongs to the thymidine/pyrimidine-nucleoside phosphorylase family. Type 2 subfamily.

The catalysed reaction is AMP + phosphate = alpha-D-ribose 1,5-bisphosphate + adenine. It carries out the reaction CMP + phosphate = cytosine + alpha-D-ribose 1,5-bisphosphate. It catalyses the reaction UMP + phosphate = alpha-D-ribose 1,5-bisphosphate + uracil. In terms of biological role, catalyzes the conversion of AMP and phosphate to adenine and ribose 1,5-bisphosphate (R15P). Exhibits phosphorylase activity toward CMP and UMP in addition to AMP. Functions in an archaeal AMP degradation pathway, together with R15P isomerase and RubisCO. In Pyrococcus horikoshii (strain ATCC 700860 / DSM 12428 / JCM 9974 / NBRC 100139 / OT-3), this protein is AMP phosphorylase.